A 312-amino-acid chain; its full sequence is Putative 1-aminocyclopropane-1-carboxylate deaminase (312 aa).

Lys42 is modified (N6-(pyridoxal phosphate)lysine).

This sequence belongs to the ACC deaminase/D-cysteine desulfhydrase family. Pyridoxal 5'-phosphate serves as cofactor.

It carries out the reaction 1-aminocyclopropane-1-carboxylate + H2O = 2-oxobutanoate + NH4(+). The polypeptide is Putative 1-aminocyclopropane-1-carboxylate deaminase (Thermotoga maritima (strain ATCC 43589 / DSM 3109 / JCM 10099 / NBRC 100826 / MSB8)).